The primary structure comprises 152 residues: Globin CTT-E/E' (152 aa).

Residues 1-15 (MKFIILALCVAAASA) form the signal peptide. Residues 16-152 (LSGDQIGLVQ…AFFGAVFAKM (137 aa)) enclose the Globin domain. Residues histidine 73 and histidine 102 each coordinate heme b.

This sequence belongs to the globin family.

The polypeptide is Globin CTT-E/E' (CTT-E) (Chironomus thummi thummi (Midge)).